The following is a 497-amino-acid chain: Cytoplasmic dynein 1 light intermediate chain 2 (497 aa).

61 to 68 (GEDGSGKT) is an ATP binding site. Disordered stretches follow at residues 187-206 (PEEGCQGSPQRRGPLTSGSD), 366-408 (QQES…IKNN), 423-461 (LSKKTGSPGSPSAGGVQSTAKKSGTEGEPQSFRSLTEQC), and 474-497 (QEELDRMTRKPDSMVTNSSTENEA). Phosphoserine is present on residues serine 194, serine 369, and serine 377. Omega-N-methylarginine is present on arginine 383. Positions 423 to 444 (LSKKTGSPGSPSAGGVQSTAKK) are enriched in polar residues. Threonine 427 is modified (phosphothreonine). A phosphoserine mark is found at serine 429 and serine 432. Over residues 476–485 (ELDRMTRKPD) the composition is skewed to basic and acidic residues. Residues 487 to 497 (MVTNSSTENEA) are compositionally biased toward polar residues.

The protein belongs to the dynein light intermediate chain family. Homodimer. The cytoplasmic dynein 1 complex consists of two catalytic heavy chains (HCs) and a number of non-catalytic subunits presented by intermediate chains (ICs), light intermediate chains (LICs) and light chains (LCs); the composition seems to vary in respect to the IC, LIC and LC composition. The heavy chain homodimer serves as a scaffold for the probable homodimeric assembly of the respective non-catalytic subunits. The ICs and LICs bind directly to the HC dimer and the LCs assemble on the IC dimer. Self-associates. Interacts with DYNC1H1; DYNC1LI1 and DYNC1LI2 bind mutually exclusive to DYNC1H1. Ubiquitous.

The protein resides in the cytoplasm. It localises to the cytoskeleton. Functionally, acts as one of several non-catalytic accessory components of the cytoplasmic dynein 1 complex that are thought to be involved in linking dynein to cargos and to adapter proteins that regulate dynein function. Cytoplasmic dynein 1 acts as a motor for the intracellular retrograde motility of vesicles and organelles along microtubules. May play a role in binding dynein to membranous organelles or chromosomes. The polypeptide is Cytoplasmic dynein 1 light intermediate chain 2 (Dync1li2) (Rattus norvegicus (Rat)).